The primary structure comprises 98 residues: Alpha-elicitin DRE-alpha (98 aa).

3 cysteine pairs are disulfide-bonded: C3–C71, C27–C56, and C51–C95.

This sequence belongs to the elicitin family.

The protein resides in the secreted. Functionally, induces local and distal defense responses (incompatible hypersensitive reaction) in plants from the solanaceae and cruciferae families. Elicits leaf necrosis and causes the accumulation of pathogenesis-related proteins. Might interact with the lipidic molecules of the plasma membrane. The polypeptide is Alpha-elicitin DRE-alpha (Phytophthora drechsleri).